A 200-amino-acid chain; its full sequence is Holliday junction branch migration complex subunit RuvA (200 aa).

The interval 1-63 is domain I; the sequence is MIALLTGQIA…EDAILLYGFR (63 aa). The segment at 64–142 is domain II; that stretch reads TRTEKSFFQL…KLDSGSIPAG (79 aa). Positions 143 to 153 are flexible linker; the sequence is DAVGRSLPAGS. The segment at 153–200 is domain III; the sequence is SVLDDVSSALVNLGYKDPQVRKVLAELDCAGSASVEEVLKQALKILMK.

It belongs to the RuvA family. Homotetramer. Forms an RuvA(8)-RuvB(12)-Holliday junction (HJ) complex. HJ DNA is sandwiched between 2 RuvA tetramers; dsDNA enters through RuvA and exits via RuvB. An RuvB hexamer assembles on each DNA strand where it exits the tetramer. Each RuvB hexamer is contacted by two RuvA subunits (via domain III) on 2 adjacent RuvB subunits; this complex drives branch migration. In the full resolvosome a probable DNA-RuvA(4)-RuvB(12)-RuvC(2) complex forms which resolves the HJ.

Its subcellular location is the cytoplasm. In terms of biological role, the RuvA-RuvB-RuvC complex processes Holliday junction (HJ) DNA during genetic recombination and DNA repair, while the RuvA-RuvB complex plays an important role in the rescue of blocked DNA replication forks via replication fork reversal (RFR). RuvA specifically binds to HJ cruciform DNA, conferring on it an open structure. The RuvB hexamer acts as an ATP-dependent pump, pulling dsDNA into and through the RuvAB complex. HJ branch migration allows RuvC to scan DNA until it finds its consensus sequence, where it cleaves and resolves the cruciform DNA. The polypeptide is Holliday junction branch migration complex subunit RuvA (Trichlorobacter lovleyi (strain ATCC BAA-1151 / DSM 17278 / SZ) (Geobacter lovleyi)).